The sequence spans 294 residues: Formamidopyrimidine-DNA glycosylase (294 aa).

P2 serves as the catalytic Schiff-base intermediate with DNA. The active-site Proton donor is the E3. The Proton donor; for beta-elimination activity role is filled by K61. DNA-binding residues include H104, R123, and K169. The segment at 255–289 (AVYGRQDEPCRRCGAPIVREKFMNRSSYSCPRCQP) adopts an FPG-type zinc-finger fold. Residue R279 is the Proton donor; for delta-elimination activity of the active site.

It belongs to the FPG family. Monomer. Requires Zn(2+) as cofactor.

The catalysed reaction is Hydrolysis of DNA containing ring-opened 7-methylguanine residues, releasing 2,6-diamino-4-hydroxy-5-(N-methyl)formamidopyrimidine.. It carries out the reaction 2'-deoxyribonucleotide-(2'-deoxyribose 5'-phosphate)-2'-deoxyribonucleotide-DNA = a 3'-end 2'-deoxyribonucleotide-(2,3-dehydro-2,3-deoxyribose 5'-phosphate)-DNA + a 5'-end 5'-phospho-2'-deoxyribonucleoside-DNA + H(+). Its function is as follows. Involved in base excision repair of DNA damaged by oxidation or by mutagenic agents. Acts as a DNA glycosylase that recognizes and removes damaged bases. Has a preference for oxidized purines, such as 7,8-dihydro-8-oxoguanine (8-oxoG). Has AP (apurinic/apyrimidinic) lyase activity and introduces nicks in the DNA strand. Cleaves the DNA backbone by beta-delta elimination to generate a single-strand break at the site of the removed base with both 3'- and 5'-phosphates. The protein is Formamidopyrimidine-DNA glycosylase of Nocardia farcinica (strain IFM 10152).